Reading from the N-terminus, the 354-residue chain is Rhodopsin (354 aa).

Residues 1 to 36 lie on the Extracellular side of the membrane; it reads MNGTEGPYFYVPMVNTTGIVRSPYEYPQYYLVSPAA. N-linked (GlcNAc...) asparagine glycans are attached at residues Asn2 and Asn15. A helical transmembrane segment spans residues 37-61; it reads YACLGAYMFFLILVGFPVNFLTLYV. Residues 62–73 are Cytoplasmic-facing; sequence TIEHKKLRTPLN. Residues 74–96 traverse the membrane as a helical segment; that stretch reads YILLNLAVADLFMVFGGFTTTIY. Residues 97 to 110 lie on the Extracellular side of the membrane; it reads TSMHGYFVLGRLGC. An intrachain disulfide couples Cys110 to Cys187. The helical transmembrane segment at 111–133 threads the bilayer; that stretch reads NLEGYFATLGGEIGLWSLVVLAV. The short motif at 134-136 is the 'Ionic lock' involved in activated form stabilization element; the sequence is ERW. Residues 134-152 are Cytoplasmic-facing; it reads ERWLVVCKPISNFRFTENH. Residues 153-173 form a helical membrane-spanning segment; it reads AIMGLVFTWIMANACAAPPLL. Residues 174-202 lie on the Extracellular side of the membrane; the sequence is GWSRYIPEGMQCSCGVDYYTRAEGFNNES. The chain crosses the membrane as a helical span at residues 203–224; sequence FVIYMFICHFCIPLVVVFFCYG. The Cytoplasmic portion of the chain corresponds to 225–252; sequence RLLCAVKEAAAAQQESETTQRAEREVTR. Residues 253–274 traverse the membrane as a helical segment; that stretch reads MVVILVIGFLVCWTPYASVAWY. Over 275–286 the chain is Extracellular; it reads IFSNQGSEFGPL. Residues 287-308 form a helical membrane-spanning segment; sequence FMTIPAFFAKSSSIYNPMIYIC. At Lys296 the chain carries N6-(retinylidene)lysine. The Cytoplasmic segment spans residues 309–354; it reads MNKQFRHCMITTLCCGKNPFEEEEGASTTASKTEASSVSSSSVSPA. S-palmitoyl cysteine attachment occurs at residues Cys322 and Cys323. A disordered region spans residues 333–354; the sequence is GASTTASKTEASSVSSSSVSPA. Positions 334-354 are enriched in low complexity; sequence ASTTASKTEASSVSSSSVSPA.

Belongs to the G-protein coupled receptor 1 family. Opsin subfamily. Post-translationally, phosphorylated on some or all of the serine and threonine residues present in the C-terminal region. Contains one covalently linked retinal chromophore.

It localises to the membrane. The protein resides in the cell projection. It is found in the cilium. The protein localises to the photoreceptor outer segment. In terms of biological role, photoreceptor required for image-forming vision at low light intensity. While most salt water fish species use retinal as chromophore, most freshwater fish use 3-dehydroretinal, or a mixture of retinal and 3-dehydroretinal. Light-induced isomerization of 11-cis to all-trans retinal triggers a conformational change that activates signaling via G-proteins. Subsequent receptor phosphorylation mediates displacement of the bound G-protein alpha subunit by arrestin and terminates signaling. The polypeptide is Rhodopsin (rho) (Gambusia affinis (Western mosquitofish)).